A 529-amino-acid polypeptide reads, in one-letter code: L-ornithine N(5)-monooxygenase (529 aa).

FAD-binding positions include 100-108 (EKQPQFAWH) and Q119. K124 lines the substrate pocket. V185 contacts FAD. 270-273 (NGQS) is a binding site for NADP(+). Substrate-binding positions include 309–312 (NEIF) and N339. NADP(+) is bound at residue 339–341 (NYG). Residue 493–495 (TLL) coordinates FAD. Residue S496 coordinates substrate.

Belongs to the lysine N(6)-hydroxylase/L-ornithine N(5)-oxygenase family. In terms of assembly, homotetramer. Requires FAD as cofactor.

It catalyses the reaction L-ornithine + NADPH + O2 = N(5)-hydroxy-L-ornithine + NADP(+) + H2O. It carries out the reaction L-ornithine + NADH + O2 = N(5)-hydroxy-L-ornithine + NAD(+) + H2O. It functions in the pathway siderophore biosynthesis. L-ornithine N(5)-monooxygenase; part of the gene cluster that mediates the biosynthesis of hydroxamate-containing siderophores that play a critical role in virulence. Cochliobolus heterostrophus produces extracellular coprogen-type siderophores including coprogen, neocoprogen I and neocoprogen II, as well as the intracellular siderophore ferricrocin. The role of extracellular siderophores is to supply iron to their producers in planta and the intracellular ferricrocin is required for intracellular iron distribution and storage with a crucial role in ascus and ascospore development. SIDA2 catalyzes the conversion of L-ornithine to N(5)-hydroxyornithine, the first step in the biosynthesis of all hydroxamate-containing siderophores. The assembly of extracellular coprogen-type siderophores is then performed by the nonribosomal peptide synthetase (NRPS) NPS6 whereas the intracellular siderophore ferricrocin is assembled by NPS2. This is L-ornithine N(5)-monooxygenase from Cochliobolus heterostrophus (strain C4 / ATCC 48331 / race T) (Southern corn leaf blight fungus).